The sequence spans 415 residues: Casein kinase I isoform delta (415 aa).

A Protein kinase domain is found at 9–277 (YRLGRKIGSG…YLRQLFRNLF (269 aa)). ATP contacts are provided by residues 15 to 23 (IGSGSFGDI) and Lys-38. The active-site Proton acceptor is the Asp-128. Residues 301-315 (AEDAERERREREERL) are compositionally biased toward basic and acidic residues. Residues 301-415 (AEDAERERRE…SSGLPSTVHR (115 aa)) form a disordered region. The interval 317-342 (HTRNPAVRGLPSTASGRLRGTQEVTP) is autoinhibitory. Low complexity predominate over residues 341-352 (TPSTPLTPTSHT). Over residues 380–415 (NVSSSDLTSRQDTSRMSTSQIPSRVTSSGLPSTVHR) the composition is skewed to polar residues.

It belongs to the protein kinase superfamily. As to quaternary structure, monomer. Interacts with per1 and per2. Component of the circadian core oscillator. In terms of processing, autophosphorylated on serine and threonine residues. As to expression, detected in retina photoreceptor cells.

The protein resides in the cytoplasm. It localises to the nucleus. The catalysed reaction is L-seryl-[protein] + ATP = O-phospho-L-seryl-[protein] + ADP + H(+). It catalyses the reaction L-threonyl-[protein] + ATP = O-phospho-L-threonyl-[protein] + ADP + H(+). It carries out the reaction L-seryl-[tau protein] + ATP = O-phospho-L-seryl-[tau protein] + ADP + H(+). The enzyme catalyses L-threonyl-[tau protein] + ATP = O-phospho-L-threonyl-[tau protein] + ADP + H(+). Its activity is regulated as follows. Exhibits substrate-dependent heparin activation. Its function is as follows. Casein kinases are operationally defined by their preferential utilization of acidic proteins such as caseins as substrates. Can phosphorylate a large number of proteins. Central component of the circadian clock. May act as a negative regulator of circadian rhythmicity by phosphorylating per1 and per2, which may lead to their degradation. Participates in wnt signaling. Functionally, has no kinase activity. The protein is Casein kinase I isoform delta (csnk1d) of Xenopus laevis (African clawed frog).